Here is a 391-residue protein sequence, read N- to C-terminus: Histamine H4 receptor (391 aa).

Topologically, residues 1-19 are extracellular; it reads MSESNSTGILPPAAQVPLA. A glycan (N-linked (GlcNAc...) asparagine) is linked at Asn-5. The chain crosses the membrane as a helical span at residues 20 to 40; it reads FLMSSFAFAIMVGNAVVILAF. Over 41 to 52 the chain is Cytoplasmic; sequence VVDRNLRHRSNY. The chain crosses the membrane as a helical span at residues 53–73; the sequence is FFLNLAISDFLVGLISIPLYI. Residues 74–87 are Extracellular-facing; that stretch reads PHVLFNWNFGSGIC. A disulfide bridge connects residues Cys-87 and Cys-166. Residues 88–108 traverse the membrane as a helical segment; sequence MFWLITDYLLCTASVYNIVLI. The Cytoplasmic segment spans residues 109–131; it reads SYDRYQSVSNAVSYRAQHTGIMK. A helical transmembrane segment spans residues 132–152; sequence IVAQMVAVWILAFLVNGPMIL. Over 153-174 the chain is Extracellular; the sequence is ASDSWKNSTNTKDCEPGFVTEW. An N-linked (GlcNAc...) asparagine glycan is attached at Asn-159. Residues 175 to 195 form a helical membrane-spanning segment; that stretch reads YILTITMLLEFLLPVISVAYF. Over 196-306 the chain is Cytoplasmic; sequence NVQIYWSLWK…LLRGRKLARS (111 aa). A disordered region spans residues 238–258; it reads TSNPGLKESAASRHSESPRRK. The span at 247-256 shows a compositional bias: basic and acidic residues; the sequence is AASRHSESPR. A helical transmembrane segment spans residues 307–327; sequence LAILLSAFAICWAPYCLFTIV. Over 328–343 the chain is Extracellular; that stretch reads LSTYPRTERPKSVWYS. The chain crosses the membrane as a helical span at residues 344 to 364; that stretch reads IAFWLQWFNSFVNPFLYPLCH. The Cytoplasmic portion of the chain corresponds to 365-391; sequence RRFQKAFWKILCVTKQPALSQNQSVSS.

The protein belongs to the G-protein coupled receptor 1 family. In terms of assembly, interacts with TSPAN4.

The protein localises to the cell membrane. Its function is as follows. The H4 subclass of histamine receptors could mediate the histamine signals in peripheral tissues. Displays a significant level of constitutive activity (spontaneous activity in the absence of agonist). The sequence is that of Histamine H4 receptor (Hrh4) from Mus musculus (Mouse).